The chain runs to 224 residues: MRLVIARCRVDYVGRLTSHLPTARRLLLVKADGSVSIHADDRAYKPLNWMSPPCWLVETTGDSDDILWVVTNKAGEELRITLEEVEHDSSYELGLDPGLIKDGVEAHLQELLAEHVETLGPGYTLVRREYMTAIGPVDLLVRDADGASVAVEIKRRGEIDGVEQLTRYLELLNRDPLLAPVTGVFAAQQIKPQAKTLANDRGIRCLVLDYEALRGTESTEFRLF.

Belongs to the NucS endonuclease family.

Its subcellular location is the cytoplasm. Cleaves both 3' and 5' ssDNA extremities of branched DNA structures. This Rhodococcus erythropolis (strain PR4 / NBRC 100887) protein is Endonuclease NucS.